Here is a 145-residue protein sequence, read N- to C-terminus: Cuticle protein 7 (145 aa).

Residues 41 to 114 (PVNVATSYHA…VASNALPVGP (74 aa)) form the Chitin-binding type R&amp;R domain.

The chain is Cuticle protein 7 from Blaberus craniifer (Death's head cockroach).